The primary structure comprises 72 residues: Translation initiation factor IF-1 2 (72 aa).

In terms of domain architecture, S1-like spans 1–72 (MAKDDVIQMQ…SRARIVFRTK (72 aa)).

This sequence belongs to the IF-1 family. Component of the 30S ribosomal translation pre-initiation complex which assembles on the 30S ribosome in the order IF-2 and IF-3, IF-1 and N-formylmethionyl-tRNA(fMet); mRNA recruitment can occur at any time during PIC assembly.

It localises to the cytoplasm. Its function is as follows. One of the essential components for the initiation of protein synthesis. Stabilizes the binding of IF-2 and IF-3 on the 30S subunit to which N-formylmethionyl-tRNA(fMet) subsequently binds. Helps modulate mRNA selection, yielding the 30S pre-initiation complex (PIC). Upon addition of the 50S ribosomal subunit IF-1, IF-2 and IF-3 are released leaving the mature 70S translation initiation complex. This Cupriavidus metallidurans (strain ATCC 43123 / DSM 2839 / NBRC 102507 / CH34) (Ralstonia metallidurans) protein is Translation initiation factor IF-1 2.